The following is an 876-amino-acid chain: Alanine--tRNA ligase (876 aa).

The Zn(2+) site is built by His565, His569, Cys667, and His671.

The protein belongs to the class-II aminoacyl-tRNA synthetase family. It depends on Zn(2+) as a cofactor.

It is found in the cytoplasm. It carries out the reaction tRNA(Ala) + L-alanine + ATP = L-alanyl-tRNA(Ala) + AMP + diphosphate. Functionally, catalyzes the attachment of alanine to tRNA(Ala) in a two-step reaction: alanine is first activated by ATP to form Ala-AMP and then transferred to the acceptor end of tRNA(Ala). Also edits incorrectly charged Ser-tRNA(Ala) and Gly-tRNA(Ala) via its editing domain. This Staphylococcus aureus (strain USA300) protein is Alanine--tRNA ligase.